Here is a 287-residue protein sequence, read N- to C-terminus: tRNA pseudouridine synthase B (287 aa).

Catalysis depends on Asp-37, which acts as the Nucleophile.

This sequence belongs to the pseudouridine synthase TruB family. Type 1 subfamily.

The enzyme catalyses uridine(55) in tRNA = pseudouridine(55) in tRNA. Its function is as follows. Responsible for synthesis of pseudouridine from uracil-55 in the psi GC loop of transfer RNAs. The polypeptide is tRNA pseudouridine synthase B (Caldicellulosiruptor saccharolyticus (strain ATCC 43494 / DSM 8903 / Tp8T 6331)).